A 312-amino-acid polypeptide reads, in one-letter code: tRNA uridine(34) hydroxylase (312 aa).

One can recognise a Rhodanese domain in the interval 130-225; it reads RGDEVVFFDG…YGEQFGNKGL (96 aa). Catalysis depends on Cys185, which acts as the Cysteine persulfide intermediate.

This sequence belongs to the TrhO family.

The enzyme catalyses uridine(34) in tRNA + AH2 + O2 = 5-hydroxyuridine(34) in tRNA + A + H2O. Catalyzes oxygen-dependent 5-hydroxyuridine (ho5U) modification at position 34 in tRNAs. This Corynebacterium glutamicum (strain R) protein is tRNA uridine(34) hydroxylase.